The sequence spans 391 residues: Glycerol-3-phosphate dehydrogenase [NAD(+)] 1 (391 aa).

NAD(+) contacts are provided by residues 41–46 (GSGNWG), phenylalanine 129, lysine 152, and alanine 185. Substrate is bound at residue lysine 152. The active-site Proton acceptor is the lysine 245. Positions 310 and 339 each coordinate NAD(+). 310 to 311 (RN) is a substrate binding site.

The protein belongs to the NAD-dependent glycerol-3-phosphate dehydrogenase family.

Its subcellular location is the cytoplasm. It carries out the reaction sn-glycerol 3-phosphate + NAD(+) = dihydroxyacetone phosphate + NADH + H(+). This is Glycerol-3-phosphate dehydrogenase [NAD(+)] 1 (GPD1) from Saccharomyces uvarum (Yeast).